Here is a 418-residue protein sequence, read N- to C-terminus: UDP-N-acetylglucosamine 1-carboxyvinyltransferase (418 aa).

Lys-22 to Asn-23 contributes to the phosphoenolpyruvate binding site. Arg-92 is a UDP-N-acetyl-alpha-D-glucosamine binding site. Cys-116 functions as the Proton donor in the catalytic mechanism. Cys-116 carries the post-translational modification 2-(S-cysteinyl)pyruvic acid O-phosphothioketal. Asp-305 and Ile-327 together coordinate UDP-N-acetyl-alpha-D-glucosamine.

This sequence belongs to the EPSP synthase family. MurA subfamily.

It localises to the cytoplasm. It carries out the reaction phosphoenolpyruvate + UDP-N-acetyl-alpha-D-glucosamine = UDP-N-acetyl-3-O-(1-carboxyvinyl)-alpha-D-glucosamine + phosphate. It functions in the pathway cell wall biogenesis; peptidoglycan biosynthesis. In terms of biological role, cell wall formation. Adds enolpyruvyl to UDP-N-acetylglucosamine. The protein is UDP-N-acetylglucosamine 1-carboxyvinyltransferase of Gluconobacter oxydans (strain 621H) (Gluconobacter suboxydans).